The primary structure comprises 130 residues: Protein Wnt-9 (130 aa).

A lipid anchor (O-palmitoleoyl serine; by PORCN) is attached at serine 1. Residues 41–69 (AGERTIARSRRRPREQRGQRRPKVSDGAL) form a disordered region. Over residues 47–62 (ARSRRRPREQRGQRRP) the composition is skewed to basic residues. N-linked (GlcNAc...) asparagine glycosylation occurs at asparagine 97. A disulfide bond links cysteine 100 and cysteine 111.

It belongs to the Wnt family. In terms of processing, palmitoleoylation is required for efficient binding to frizzled receptors. Depalmitoleoylation leads to Wnt signaling pathway inhibition.

The protein localises to the secreted. The protein resides in the extracellular space. It localises to the extracellular matrix. In terms of biological role, ligand for members of the frizzled family of seven transmembrane receptors. Probable developmental protein. May be a signaling molecule which affects the development of discrete regions of tissues. Is likely to signal over only few cell diameters. The chain is Protein Wnt-9 (WNT-9) from Eptatretus stoutii (Pacific hagfish).